Reading from the N-terminus, the 224-residue chain is Peroxiredoxin-6 (224 aa).

Residues 5-169 (LLLGDEAPNF…ILRVVDSLQL (165 aa)) enclose the Thioredoxin domain. A required and sufficient for targeting to lysosomes and lamellar bodies region spans residues 31–40 (DSWGILFSHP). Phosphothreonine is present on threonine 44. Cysteine 47 acts as the Cysteine sulfenic acid (-SOH) intermediate; for peroxidase activity in catalysis. At lysine 63 the chain carries N6-acetyllysine. Tyrosine 89 is modified (phosphotyrosine). Catalysis depends on aspartate 140, which acts as the For phospholipase activity. Residue threonine 177 is modified to Phosphothreonine; by MAPK. Lysine 209 bears the N6-acetyllysine; alternate mark. Position 209 is an N6-succinyllysine; alternate (lysine 209).

The protein belongs to the peroxiredoxin family. Prx6 subfamily. In terms of assembly, homodimer. Interacts with GSTP1; mediates PRDX6 glutathionylation and regeneration. Interacts with APEX1. Interacts with STH. May interact with FAM168B. May interact with HTR2A. In terms of processing, phosphorylation at Thr-177 by MAP kinases increases the phospholipase activity of the enzyme. Phosphorylated form exhibits a greater lysophosphatidylcholine acyltransferase activity compared to the non-phosphorylated form. Post-translationally, irreversibly inactivated by overoxidation of Cys-47 to sulfinic acid (Cys-SO(2)H) and sulfonic acid (Cys-SO(3)H) forms upon oxidative stress.

Its subcellular location is the cytoplasm. The protein resides in the lysosome. The catalysed reaction is a hydroperoxide + 2 glutathione = an alcohol + glutathione disulfide + H2O. It catalyses the reaction a 1,2-diacyl-sn-glycero-3-phosphocholine + H2O = a 1-acyl-sn-glycero-3-phosphocholine + a fatty acid + H(+). It carries out the reaction a 1-acyl-sn-glycero-3-phosphocholine + an acyl-CoA = a 1,2-diacyl-sn-glycero-3-phosphocholine + CoA. The enzyme catalyses 1-hexadecanoyl-sn-glycero-3-phosphocholine + hexadecanoyl-CoA = 1,2-dihexadecanoyl-sn-glycero-3-phosphocholine + CoA. The catalysed reaction is 1,2-dihexadecanoyl-sn-glycero-3-phosphocholine + H2O = 1-hexadecanoyl-sn-glycero-3-phosphocholine + hexadecanoate + H(+). In terms of biological role, thiol-specific peroxidase that catalyzes the reduction of hydrogen peroxide and organic hydroperoxides to water and alcohols, respectively. Can reduce H(2)O(2) and short chain organic, fatty acid, and phospholipid hydroperoxides. Also has phospholipase activity, can therefore either reduce the oxidized sn-2 fatty acyl group of phospholipids (peroxidase activity) or hydrolyze the sn-2 ester bond of phospholipids (phospholipase activity). These activities are dependent on binding to phospholipids at acidic pH and to oxidized phospholipds at cytosolic pH. Plays a role in cell protection against oxidative stress by detoxifying peroxides and in phospholipid homeostasis. Exhibits acyl-CoA-dependent lysophospholipid acyltransferase which mediates the conversion of lysophosphatidylcholine (1-acyl-sn-glycero-3-phosphocholine or LPC) into phosphatidylcholine (1,2-diacyl-sn-glycero-3-phosphocholine or PC). Shows a clear preference for LPC as the lysophospholipid and for palmitoyl CoA as the fatty acyl substrate. The chain is Peroxiredoxin-6 (Prdx6) from Rattus norvegicus (Rat).